Consider the following 2457-residue polypeptide: MALPASLAGFRIEGTASTNQADCKFGENAGAQCLSNCIIYLMSSYFNNEAPITETHDLNKVLKFGAELDSNLRKLGLLSPGQYAQLDHVPCYVQTRKWSGFIYTSAEMFGLLGMPADISDSCITSLRDLLTANYSNTIQYILYICGQKSGAIIIQGGRYTMFDPHCLKDIPESPAHVLSTSDPDALIKYVGGVSREYTACFLYFVPGHISPKNYIMSHYKVISFSDLHGSKIILEEYDLPTTNQSFCSSPQASSSPDPEVGSLLKYMSKAKRKRYPMSCGEEWTDANKKRKESGRTPPEKMTHPLPSPDIIDLTMDDDVIDLTGDDDMEDESEGDREAEPDRSGTSLPSVTLPNLAAVDQLLNSLTLPGHVPSFPALVDTDTGESYRLTRALHQLKNVLQQVLEIGVVSDSDYTPTEALNVLNYLMAWSKQLQIKNDDIKLLINSNLQIEKLFTLLKNNLISDPNLADHVQAKVCACLPAMHANRATDLQKILLHCKNLTRALEISKSSLDIKDIITTFTESFPQDFFCVCSVEEANNLVSTVQDLKRVVSNNMALTSEQDARFKALMLSVLNNTDPPASLGPIYLETETRTPLLSSAIQEAVKAIEKDTVETLSELISNIPSENAIETTFVPPVRTLLKNVTTLLTVINACVERAEIRTPEIDSSQQQLSYIGRELSKIIDETWPERAFREPVHVLDIFQKTSSHLNDLKKKMADSESLDKILSEINQTLKAIQDKAASPALINTLSDYIKNATVLAQASDPRLVEIQSQVTTLTTSTSYIESLLQKINIRTLPEVIPQLQAATKTEQGQLSLAAMNLSLIQITNSLINEALSSIHARSHNHLSNTFFNSLNSLMGLADIPGREDLIKTMESIMAVQEELVDCDDMECVEKGLTTFKYIKSSIRQYKFDKSFKTKIYLIITSEVRDLTKIKTDKQLEAWKQDVADFTPASIDDLNLFLDKAPTKTARSYATRQLKHFRDDLIKEQEMETETTPVPSTAEIERAIDLKIKATWDKILTNLRDLTFHHIAPGDWQVLLTVFNDHKSALFTKMGGELLKALQGLTAYVDSILTPLLASQLPQGQRYVAPNSDWVETFDQNVKYYLRTFHLPRVSEQLDDLERKTLLLTKLVKFTDLSQSLIGTHLEKDWSIYQKLFNSLLTVYNDHLIKTKTEVHAFLDKIASDPLLEPQAHPDLQKITQLFTEQEIIEINTLPDIFKESIKNNEKHYIASYQTEMKVFTSMVDAALAKKTQSTTEYNTHLLKIVNNMLVQAPPYAASHPISSDAISYITSLVRDKHLLEKLSYAESLKNFNWLSRLITIILTNCHPSHKQHLQTLLDEILSREQTLTPLVALEDNANQSPTERTLQAALTTLNVERVLGRATTFQKWKSQLQELEEAVKTTTQVSLLIQTISSLHDKTVTEMDPTILSSHSQALADKLKELLALKPSLDETTMSLFHGMKAYAQFKHYFVQHYVITQPKIFDAYPLSHHGTVSSSGGHQATKFNPLMRLKAFSMVTDVKKMSVWREINTTVDPTGHTFIPAPPTPAMPPIHYNVLFSSFLQAEAINLALNSNQPPTKKFGLLPGLMDARVGVQGAMLLDNQWNDISTNSAKLLDHYVRSELTPNSLTNSQFAAMTVFAHAMAMVTPHINSTRATIFPSKAIVLNQLQFLKLCLTMWPKFSGGLLRAPSFERVVQLARATLPTLLLSAPRNTLNHFLANNYRPTDTLPNTEALLFYPNQHPLVNLEKLLLTSSPFHALSTSVLNTRISMLVWGILSLSEAVLQQLWDSLYQESATFTTYIDLLRHLSAMNHKNSTLTTSTSLPQNNGPVVYSYGHTAGTTVATLEGSHPLDDGGQNIPMTLFEFVIFAIILKLKFHVFYTQEKALVNTQLGPLHLITHALDGTGDTEPFKTYISIPPQKYNGLGNLQQFCSQDEIQIFQRQHEWLVGVTKQTSFSNEDLFIVLASADNKVLSVHTFNPPINSLESETPEIVAAPIQESWPKEITTVSFWDKPALEKSPQELITEVSLVAEIFSGSAIFNTFPPSYKMVSHTPSLHVETHQLENLSITEGTPPTSPPLPDSTTQDHMEEPDNKQAKPPYQMTSPMKENTSTSGRPARSPSPSPPVLTPIKPIIPIPQATPTMPILSPFTPRLLPAAVKKHQNGAVWGHSGSLPPTHIQSSTPGPAQNTRDSGRRQIVSPVITILPGTKAGADSAGQNTSHKDISAYSPPPASKKTDRPSDTHVTAPLFSKSKLVTPRPAAKTDTGTFGPLLGHEKPPVTDLTAPVEPGHPSKVSPIIHLKPSNTGDRDPHPISDDEDSKQPPVPDTSRDKAQSRWKTPKQRPQNIFPPPKHEDDVPVTAPQPQGRKILVGGRQLPSLVYNPPTLRDIKTGMSDDKNPEPCVKENPPGVTHDPPLRIQHMEQTVNSSKYNVLLFIEKIIKSVHDHSSYMLSTLKRIKQLYI.

Residues methionine 1–leucine 234 are deubiquitination activity. A Peptidase C76 domain is found at glutamate 13–phenylalanine 224. Active-site residues include cysteine 33, aspartate 163, and histidine 165. Disordered regions lie at residues glutamate 281–valine 350, isoleucine 2064–proline 2131, glycine 2164–glutamine 2360, and glycine 2387–histidine 2407. A compositionally biased stretch (basic and acidic residues) spans serine 293–threonine 302. A compositionally biased stretch (acidic residues) spans threonine 314–glycine 334. Residues threonine 2080–glutamine 2091 show a composition bias toward basic and acidic residues. Residues serine 2115–proline 2131 show a composition bias toward pro residues. The segment covering histidine 2173–arginine 2186 has biased composition (polar residues). Residues glycine 2387–valine 2398 are compositionally biased toward basic and acidic residues.

It belongs to the herpesviridae large tegument protein family. In terms of assembly, interacts with host CUL1 and CUL4A; these interactions inhibit the E3 ligase activity of cullins. Interacts with inner tegument protein. Interacts with capsid vertex specific component CVC2. Interacts with the major capsid protein/MCP.

It is found in the virion tegument. It localises to the host cytoplasm. The protein localises to the host nucleus. The enzyme catalyses Thiol-dependent hydrolysis of ester, thioester, amide, peptide and isopeptide bonds formed by the C-terminal Gly of ubiquitin (a 76-residue protein attached to proteins as an intracellular targeting signal).. Its function is as follows. Large tegument protein that plays multiple roles in the viral cycle. During viral entry, remains associated with the capsid while most of the tegument is detached and participates in the capsid transport toward the host nucleus. Plays a role in the routing of the capsid at the nuclear pore complex and subsequent uncoating. Within the host nucleus, acts as a deneddylase and promotes the degradation of nuclear CRLs (cullin-RING ubiquitin ligases) and thereby stabilizes nuclear CRL substrates, while cytoplasmic CRLs remain unaffected. These modifications prevent host cell cycle S-phase progression and create a favorable environment allowing efficient viral genome replication. Participates later in the secondary envelopment of capsids. Indeed, plays a linker role for the association of the outer viral tegument to the capsids together with the inner tegument protein. The protein is Large tegument protein deneddylase of Apodemus sylvaticus (European woodmouse).